The sequence spans 218 residues: Uracil-DNA glycosylase (218 aa).

The active-site Proton acceptor is the D59.

The protein belongs to the uracil-DNA glycosylase (UDG) superfamily. UNG family.

The protein resides in the cytoplasm. The catalysed reaction is Hydrolyzes single-stranded DNA or mismatched double-stranded DNA and polynucleotides, releasing free uracil.. Functionally, excises uracil residues from the DNA which can arise as a result of misincorporation of dUMP residues by DNA polymerase or due to deamination of cytosine. This chain is Uracil-DNA glycosylase, found in Staphylococcus aureus (strain JH1).